Consider the following 755-residue polypeptide: Actin-related protein 5 (755 aa).

Serine 7 carries the post-translational modification Phosphoserine. A Glycyl lysine isopeptide (Lys-Gly) (interchain with G-Cter in ubiquitin) cross-link involves residue lysine 12. Threonine 24 is modified (phosphothreonine). Serine 383 carries the post-translational modification Phosphoserine. The interval glutamine 418–glutamate 444 is disordered. Residues glutamine 425 to glutamate 444 are compositionally biased toward basic and acidic residues.

This sequence belongs to the actin family. Component of the chromatin-remodeling INO80 complex, at least composed of ARP4, ARP5, ARP8, RVB1, RVB2, TAF14, NHP10, IES1, IES3, IES4, IES6, ACT1, IES2, IES5 and INO80.

The protein localises to the nucleus. In terms of biological role, probably involved in transcription regulation via its interaction with the INO80 complex, a chromatin remodeling complex. The sequence is that of Actin-related protein 5 (ARP5) from Saccharomyces cerevisiae (strain ATCC 204508 / S288c) (Baker's yeast).